A 194-amino-acid polypeptide reads, in one-letter code: MNIDFHIKPEIRILGIDDSALLNEKVMIVGAVFRGGDWIDGVLRSEITKDGLDATEVICNMIKKSKHYDQIRTVILDGITYGGFNVVDIQMLYRETGIPVIVVMRSYPDFEKIKSALKYFPDGEERWTIIKRAGKIERIPGEKSPIYIQRAGIGVETVKKIIRLTSIRSNIPEPLRVAHLIATGIILGESRGKA.

The protein belongs to the UPF0215 family.

This chain is UPF0215 protein Mbar_A0619, found in Methanosarcina barkeri (strain Fusaro / DSM 804).